The primary structure comprises 392 residues: Zinc finger protein CONSTANS-LIKE 7 (392 aa).

Positions 22, 25, 46, and 51 each coordinate Zn(2+). A B box-type; atypical zinc finger spans residues 22–65 (CDACMKRSRASWYCPADDAFLCQSCDASIHSANHLAKRHERVRL). A coiled-coil region spans residues 226 to 254 (KEENKVGFEINCKDLKRVKDEDEEEEEAK). Disordered stretches follow at residues 246 to 271 (EDEEEEEAKCENGGSKDSDREASNDK) and 326 to 346 (SDGSVTRQQGRDGGGSDGERE). Over residues 259–271 (GSKDSDREASNDK) the composition is skewed to basic and acidic residues. One can recognise a CCT domain in the interval 345–387 (REARVLRYKEKRRTRLFSKKIRYEVRKLNAEQRPRIKGRFVKR).

This sequence belongs to the CONSTANS family.

The protein resides in the nucleus. This Arabidopsis thaliana (Mouse-ear cress) protein is Zinc finger protein CONSTANS-LIKE 7 (COL7).